The sequence spans 237 residues: tRNA (guanine-N(7)-)-methyltransferase (237 aa).

Glu68, Glu93, Asp120, and Asp143 together coordinate S-adenosyl-L-methionine. Residue Asp143 is part of the active site. Substrate is bound by residues Lys147, Asp179, and Thr216 to Glu219.

It belongs to the class I-like SAM-binding methyltransferase superfamily. TrmB family.

It carries out the reaction guanosine(46) in tRNA + S-adenosyl-L-methionine = N(7)-methylguanosine(46) in tRNA + S-adenosyl-L-homocysteine. Its pathway is tRNA modification; N(7)-methylguanine-tRNA biosynthesis. Catalyzes the formation of N(7)-methylguanine at position 46 (m7G46) in tRNA. In Shewanella pealeana (strain ATCC 700345 / ANG-SQ1), this protein is tRNA (guanine-N(7)-)-methyltransferase.